Consider the following 359-residue polypeptide: Stearoyl-CoA desaturase (359 aa).

Over 1 to 72 (MPAHLLQEEI…EGPKPKLEYV (72 aa)) the chain is Cytoplasmic. Residues 73 to 93 (WRNIILMSLLHLGALYGITLI) traverse the membrane as a helical segment. Asn75 contacts substrate. Topologically, residues 94–97 (PTCK) are lumenal. The helical transmembrane segment at 98 to 118 (IYTYIWVLFYYLMGALGITAG) threads the bilayer. At 119 to 217 (AHRLWSHRTY…EKLVMFQRRY (99 aa)) the chain is on the cytoplasmic side. Positions 120 and 125 each coordinate Fe cation. The short motif at 120-125 (HRLWSH) is the Histidine box-1 element. 3 residues coordinate substrate: Asn148, Arg155, and Asp156. The Fe cation site is built by His157, His160, and His161. Positions 157–161 (HRAHH) match the Histidine box-2 motif. The substrate site is built by Arg188 and Lys189. Phosphoserine is present on residues Ser198 and Ser203. Residues 218–237 (YKPGVLLLCFILPTLVPWYL) traverse the membrane as a helical segment. The Lumenal portion of the chain corresponds to 238-241 (WDET). A helical membrane pass occupies residues 242 to 263 (FQNSLFFATLFRYALGLNVTWL). Substrate is bound at residue Trp262. Over 264–359 (VNSAAHMYGY…RTGEESYKSG (96 aa)) the chain is Cytoplasmic. Fe cation is bound by residues His269, His298, His301, and His302. Residues 298–302 (HNYHH) carry the Histidine box-3 motif.

The protein belongs to the fatty acid desaturase type 1 family. It depends on Fe(2+) as a cofactor.

The protein resides in the endoplasmic reticulum membrane. The enzyme catalyses octadecanoyl-CoA + 2 Fe(II)-[cytochrome b5] + O2 + 2 H(+) = (9Z)-octadecenoyl-CoA + 2 Fe(III)-[cytochrome b5] + 2 H2O. It catalyses the reaction hexadecanoyl-CoA + 2 Fe(II)-[cytochrome b5] + O2 + 2 H(+) = (9Z)-hexadecenoyl-CoA + 2 Fe(III)-[cytochrome b5] + 2 H2O. Stearoyl-CoA desaturase that utilizes O(2) and electrons from reduced cytochrome b5 to introduce the first double bond into saturated fatty acyl-CoA substrates. Catalyzes the insertion of a cis double bond at the delta-9 position into fatty acyl-CoA substrates including palmitoyl-CoA and stearoyl-CoA. Gives rise to a mixture of 16:1 and 18:1 unsaturated fatty acids. Plays an important role in lipid biosynthesis. Plays an important role in regulating the expression of genes that are involved in lipogenesis and in regulating mitochondrial fatty acid oxidation. Plays an important role in body energy homeostasis. Contributes to the biosynthesis of membrane phospholipids, cholesterol esters and triglycerides. The polypeptide is Stearoyl-CoA desaturase (SCD) (Bos taurus (Bovine)).